A 364-amino-acid polypeptide reads, in one-letter code: O-methyltransferase ZRP4 (364 aa).

S-adenosyl-L-methionine-binding residues include Gly208, Asp231, Asp251, Met252, and Lys265. The active-site Proton acceptor is the His269.

It belongs to the class I-like SAM-binding methyltransferase superfamily. Cation-independent O-methyltransferase family. COMT subfamily. Homodimer. In terms of tissue distribution, accumulates preferentially in the roots and is located predominantly in the region of the endodermis, low levels are seen in the leaves, stems and other shoot organs.

May be involved in the O-methylation of suberin phenylpropanoid precursors. This chain is O-methyltransferase ZRP4 (ZRP4), found in Zea mays (Maize).